The primary structure comprises 468 residues: Alpha-N-acetylgalactosaminidase (468 aa).

Residues 1–30 (MENTRRNFLKKVTAAGIGAAGLAVTDQAMA) constitute a signal peptide (tat-type signal). Residues 62 to 63 (SR), Asp-84, 133 to 136 (WEWH), 154 to 155 (EV), and Asn-183 contribute to the NAD(+) site. Tyr-212 is a substrate binding site. An NAD(+)-binding site is contributed by 243-247 (AEAQW). Substrate contacts are provided by residues Arg-248, 260 to 263 (YPTH), and Tyr-342. Residue Tyr-260 coordinates NAD(+).

This sequence belongs to the Gfo/Idh/MocA family. Glycosyl hydrolase 109 subfamily. NAD(+) is required as a cofactor. In terms of processing, predicted to be exported by the Tat system. The position of the signal peptide cleavage has not been experimentally proven.

It carries out the reaction Cleavage of non-reducing alpha-(1-&gt;3)-N-acetylgalactosamine residues from human blood group A and AB mucin glycoproteins, Forssman hapten and blood group A lacto series glycolipids.. In terms of biological role, glycosidase that has specific alpha-N-acetylgalactosaminidase activity. In Tannerella forsythia (Bacteroides forsythus), this protein is Alpha-N-acetylgalactosaminidase (nagA).